A 228-amino-acid chain; its full sequence is MSSDVVVAIDGPAGTGKSSVSKGLARALGARYLDTGGMYRMVTLAVLRAGIDPADAEAVGRAAQAVRMSVDYHPDGDRYFLGGEDVSTEIRGDKVTAAVSAVSSVPAVRTRLVGLQREMASGPGSIVVEGRDIGTVVLPDAPVKIFLTASAETRARRRNDQNVAAGLADDYEAVLADVRRRDHLDSTRRVSPLRAAPDAVVVDTSDMTEAQVIDHLRDLVRQRSEVAR.

11–19 (GPAGTGKSS) is a binding site for ATP.

Belongs to the cytidylate kinase family. Type 1 subfamily.

It is found in the cytoplasm. It carries out the reaction CMP + ATP = CDP + ADP. The enzyme catalyses dCMP + ATP = dCDP + ADP. The chain is Cytidylate kinase from Mycolicibacterium paratuberculosis (strain ATCC BAA-968 / K-10) (Mycobacterium paratuberculosis).